We begin with the raw amino-acid sequence, 55 residues long: Small ribosomal subunit protein eS31 (55 aa).

The Zn(2+) site is built by C26, C29, C44, and C47.

This sequence belongs to the eukaryotic ribosomal protein eS31 family. As to quaternary structure, part of the 30S ribosomal subunit. Requires Zn(2+) as cofactor.

This chain is Small ribosomal subunit protein eS31, found in Archaeoglobus fulgidus (strain ATCC 49558 / DSM 4304 / JCM 9628 / NBRC 100126 / VC-16).